The primary structure comprises 138 residues: Sec-independent protein translocase protein TatB (138 aa).

The chain crosses the membrane as a helical span at residues 1 to 21; the sequence is MFDIGFSELLLIAVVALVVLG. Residues 116–138 form a disordered region; it reads VHHVHVPPPSTSTHGNNGQEKSQ. The span at 126–138 shows a compositional bias: polar residues; it reads TSTHGNNGQEKSQ.

The protein belongs to the TatB family. In terms of assembly, the Tat system comprises two distinct complexes: a TatABC complex, containing multiple copies of TatA, TatB and TatC subunits, and a separate TatA complex, containing only TatA subunits. Substrates initially bind to the TatABC complex, which probably triggers association of the separate TatA complex to form the active translocon.

It is found in the cell inner membrane. Part of the twin-arginine translocation (Tat) system that transports large folded proteins containing a characteristic twin-arginine motif in their signal peptide across membranes. Together with TatC, TatB is part of a receptor directly interacting with Tat signal peptides. TatB may form an oligomeric binding site that transiently accommodates folded Tat precursor proteins before their translocation. In Xylella fastidiosa (strain Temecula1 / ATCC 700964), this protein is Sec-independent protein translocase protein TatB.